Here is a 561-residue protein sequence, read N- to C-terminus: Potassium-transporting ATPase potassium-binding subunit (561 aa).

10 helical membrane-spanning segments follow: residues 4-24, 65-85, 133-153, 177-197, 253-273, 285-305, 380-400, 417-437, 484-504, and 528-548; these read IVMQDAFFVVLLLVLAVPLGI, AVSVLAFSAVGFVFVMAVLML, IGLTVQNFVSAATGIAVLFAV, LYILLPLSLILALLLVSQGVV, FTNLIEMLAILLIPVALVVMF, AIMTAMMIVFVIGVVAITISE, GLYGMIGFIILTVFIAGLLVG, MVCLLILVPPLLTLFGTAVAV, MVGAVMMLLARFIPLVAALYL, and FIGLLIGVVVLVGALSFLPAL.

Belongs to the KdpA family. The system is composed of three essential subunits: KdpA, KdpB and KdpC.

It localises to the cell membrane. In terms of biological role, part of the high-affinity ATP-driven potassium transport (or Kdp) system, which catalyzes the hydrolysis of ATP coupled with the electrogenic transport of potassium into the cytoplasm. This subunit binds the extracellular potassium ions and delivers the ions to the membrane domain of KdpB through an intramembrane tunnel. This chain is Potassium-transporting ATPase potassium-binding subunit, found in Listeria monocytogenes serotype 4b (strain F2365).